Here is a 180-residue protein sequence, read N- to C-terminus: MASMISSSAVTTVSRASTVQSAAVAPFGGLKSMTGFPVKKVNTDITSITSNGGRVKCMQVWPPIGKKKFETLSYLPPLTRDQLLKEVEYLLRKGWVPCLEFELEKGFVYREHNKSPGYYDGRYWTMWKLPMFGTTDASQVLKELDEVVAAYPQAFVRIIGFDNVRQVQCISFIAHTPESY.

The transit peptide at 1 to 56 directs the protein to the chloroplast; that stretch reads MASMISSSAVTTVSRASTVQSAAVAPFGGLKSMTGFPVKKVNTDITSITSNGGRVK.

Belongs to the RuBisCO small chain family. In terms of assembly, heterohexadecamer of 8 large and 8 small subunits.

It localises to the plastid. The protein localises to the chloroplast. In terms of biological role, ruBisCO catalyzes two reactions: the carboxylation of D-ribulose 1,5-bisphosphate, the primary event in carbon dioxide fixation, as well as the oxidative fragmentation of the pentose substrate. Both reactions occur simultaneously and in competition at the same active site. Although the small subunit is not catalytic it is essential for maximal activity. Binds to abscisic acid (ABA); only half of the possible binding sites are occupied in the crystal; and there are indications this is a low affinity site. In Pisum sativum (Garden pea), this protein is Ribulose bisphosphate carboxylase small subunit, chloroplastic 3 (RBCS.3A).